A 294-amino-acid chain; its full sequence is MQGRKGANTLGRSLEIDLLRSFVVIAEVRALSRAAARVGRTQSALSQQMKRLEDIVDQPLFQRTGRGVVLTHPGERLLVHAQRILRQHDEAMADLCGTGLTGTIRFGCPDDYAEVFLPPLLRQFSSQHPQAIVEIVCGPTPRLLEQLEKRAVDLAMISLPDDGANDDIIRREQLVWIGYPGLEPAHFDPLPLALSDPDTLDHIAACDALHRAGRDYRVAYASSSLAGLIALVRSGQAFAVMTQTAVPADLAIVNGDPRLPPLPAVGITLKFDRKRPSHLTAAFAEHIRAVLPML.

An HTH lysR-type domain is found at 14 to 70 (LEIDLLRSFVVIAEVRALSRAAARVGRTQSALSQQMKRLEDIVDQPLFQRTGRGVVL). The H-T-H motif DNA-binding region spans 31–50 (LSRAAARVGRTQSALSQQMK).

Belongs to the LysR transcriptional regulatory family.

The chain is HTH-type transcriptional regulator DgdR (dgdR) from Burkholderia cepacia (Pseudomonas cepacia).